The sequence spans 487 residues: Serine/threonine-protein kinase 4 (487 aa).

Met-1 bears the N-acetylmethionine mark. Residue Thr-3 is modified to Phosphothreonine. One can recognise a Protein kinase domain in the interval 30-281 (FDVLEKLGEG…ATQLLQHPFV (252 aa)). ATP-binding positions include 36–44 (LGEGSYGSV) and Lys-59. Asp-149 acts as the Proton acceptor in catalysis. Thr-183 carries the post-translational modification Phosphothreonine; by autocatalysis. Ser-265 bears the Phosphoserine mark. The stretch at 290 to 310 (LRDLINEAMDVKLKRQESQQR) forms a coiled coil. Residues 303-312 (KRQESQQREV) are compositionally biased toward basic and acidic residues. Residues 303–332 (KRQESQQREVDQDDEENSEEDEMDSGTMVR) form a disordered region. Positions 313-326 (DQDDEENSEEDEMD) are enriched in acidic residues. Ser-320 bears the Phosphoserine mark. Thr-340 and Thr-367 each carry phosphothreonine. A Phosphothreonine; by PKB/AKT1 modification is found at Thr-387. Phosphoserine occurs at positions 410 and 414. The residue at position 433 (Tyr-433) is a Phosphotyrosine. The region spanning 433–480 (YEFLKSWTVEDLQKRLLALDPMMEQEIEEIRQKYQSKRQPILDAIEAK) is the SARAH domain.

This sequence belongs to the protein kinase superfamily. STE Ser/Thr protein kinase family. STE20 subfamily. As to quaternary structure, homodimer; mediated via the coiled-coil region. Interacts with NORE1, which inhibits autoactivation. Interacts with and stabilizes SAV1. Interacts with RASSF1. Interacts with FOXO3. Interacts with RASSF2 (via SARAH domain). Interacts with AR, PKB/AKT1, TNNI3 and SIRT1. Interacts with DLG5 (via PDZ domain 3). Interacts with MARK3 and SCRIB in the presence of DLG5. Mg(2+) is required as a cofactor. In terms of processing, autophosphorylated on serine and threonine residues. Phosphorylation at Thr-387 by PKB/AKT1, leads to inhibition of its: kinase activity, nuclear translocation and autophosphorylation at Thr-183. It also diminishes its cleavage by caspases and its ability to phosphorylate FOXO3. Post-translationally, proteolytically cleaved by caspase-3 during apoptosis at Asp-326 and Asp-349 resulting in a 37 kDa or a 39 kDa subunit respectively. The 39 kDa subunit is further cleaved into the 37 kDa form. Proteolytic cleavage results in kinase activation and nuclear translocation of the truncated form (MST1/N). It is less likely that cleavage at Asp-349 is a prerequisite for activation as this site is not conserved in the murine ortholog.

Its subcellular location is the cytoplasm. The protein localises to the nucleus. It carries out the reaction L-seryl-[protein] + ATP = O-phospho-L-seryl-[protein] + ADP + H(+). It catalyses the reaction L-threonyl-[protein] + ATP = O-phospho-L-threonyl-[protein] + ADP + H(+). With respect to regulation, inhibited by the C-terminal non-catalytic region. Activated by caspase-cleavage. Full activation also requires homodimerization and autophosphorylation of Thr-183. Activated by RASSF1 which acts by preventing its dephosphorylation. Its function is as follows. Stress-activated, pro-apoptotic kinase which, following caspase-cleavage, enters the nucleus and induces chromatin condensation followed by internucleosomal DNA fragmentation. Key component of the Hippo signaling pathway which plays a pivotal role in organ size control and tumor suppression by restricting proliferation and promoting apoptosis. The core of this pathway is composed of a kinase cascade wherein STK3/MST2 and STK4/MST1, in complex with its regulatory protein SAV1, phosphorylates and activates LATS1/2 in complex with its regulatory protein MOB1, which in turn phosphorylates and inactivates YAP1 oncoprotein and WWTR1/TAZ. Phosphorylation of YAP1 by LATS2 inhibits its translocation into the nucleus to regulate cellular genes important for cell proliferation, cell death, and cell migration. STK3/MST2 and STK4/MST1 are required to repress proliferation of mature hepatocytes, to prevent activation of facultative adult liver stem cells (oval cells), and to inhibit tumor formation. Phosphorylates 'Ser-14' of histone H2B (H2BS14ph) during apoptosis. Phosphorylates FOXO3 upon oxidative stress, which results in its nuclear translocation and cell death initiation. Phosphorylates MOBKL1A, MOBKL1B and RASSF2. Phosphorylates TNNI3 (cardiac Tn-I) and alters its binding affinity to TNNC1 (cardiac Tn-C) and TNNT2 (cardiac Tn-T). Phosphorylates FOXO1 on 'Ser-212' and regulates its activation and stimulates transcription of PMAIP1 in a FOXO1-dependent manner. Phosphorylates SIRT1 and inhibits SIRT1-mediated p53/TP53 deacetylation, thereby promoting p53/TP53 dependent transcription and apoptosis upon DNA damage. Acts as an inhibitor of PKB/AKT1. Phosphorylates AR on 'Ser-650' and suppresses its activity by intersecting with PKB/AKT1 signaling and antagonizing formation of AR-chromatin complexes. This Aotus nancymaae (Ma's night monkey) protein is Serine/threonine-protein kinase 4 (STK4).